We begin with the raw amino-acid sequence, 427 residues long: MHSPLQTQQPEQRCWPMTSTVSEIEEVLPDEDSDRTTLLNGEPLRRRVSGKSPVDEGPRRIFRQQSFGRDIGHAAAETYLITGLSFKLLRYLGVGYRWMTKLLALTCYAMLLMPGFLQVAYSYFFSKQVRRSIVYGDQPRNRLDLYLPSNNDGLKPVVVFVTGGAWIIGYKAWGSLLGMQLAERDIIVACLDYRNFPQGTISDMVTDASQGISFVCNNISAFGGDPNRIYLMGQSAGAHIAACALLEQATKELKGESISWTVSQIKAYFGLSGGYNLYKLVDHFHNRGLYRSIFLSIMEGEESFEKFSPEVRLKDPVVGKAASLLPPIILFHGSSDYSIPCDESKTFTDALQAVGAKAELVLYSGKTHTDLFLQDPLRGGKDELFDDIVSVIHAEDNDGLTKDSLAPPRKRLVPELLLKLAREISPF.

The interval Glu-26–Arg-59 is disordered. 2 helical membrane passes run Leu-102–Ser-122 and Val-157–Leu-177. Substrate contacts are provided by residues Gly-163 to Ala-165 and Gln-234 to Ala-236. Active-site residues include Ser-235, Asp-336, and His-368.

It belongs to the AB hydrolase superfamily. Isoprenylcysteine methylesterase family. Expressed in roots, rosette and cauline leaves, stems, flowers and siliques.

It localises to the endoplasmic reticulum membrane. The protein localises to the golgi apparatus membrane. The enzyme catalyses [protein]-C-terminal S-[(2E,6E)-farnesyl]-L-cysteine methyl ester + H2O = [protein]-C-terminal S-[(2E,6E)-farnesyl]-L-cysteine + methanol + H(+). Catalyzes the demethylation of isoprenylcysteine methylesters. In vitro, is specific for N-acetyl-S-farnesyl-L-cysteine methyl ester (AFCme) and has low activity toward N-acetyl-S-geranyl-L-cysteine methyl ester (AGCme). Acts as a positive regulator of ABA signaling. May be involved in the demethylation and inactivation of isoprenylated negative regulators of abscisic acid (ABA) signaling. Carboxyl methylation is a reversible and potentially regulated step in the post-translational modification of prenylated proteins. This is Isoprenylcysteine alpha-carbonyl methylesterase ICME from Arabidopsis thaliana (Mouse-ear cress).